Consider the following 412-residue polypeptide: Multifunctional CCA protein (412 aa).

Residues glycine 8 and arginine 11 each coordinate ATP. CTP-binding residues include glycine 8 and arginine 11. Mg(2+)-binding residues include aspartate 21 and aspartate 23. Arginine 91, arginine 137, and arginine 140 together coordinate ATP. Residues arginine 91, arginine 137, and arginine 140 each coordinate CTP. One can recognise an HD domain in the interval 228-329; that stretch reads TGIHTLMTLS…VKLFDSIDAW (102 aa).

The protein belongs to the tRNA nucleotidyltransferase/poly(A) polymerase family. Bacterial CCA-adding enzyme type 1 subfamily. In terms of assembly, monomer. Can also form homodimers and oligomers. Requires Mg(2+) as cofactor. It depends on Ni(2+) as a cofactor.

The catalysed reaction is a tRNA precursor + 2 CTP + ATP = a tRNA with a 3' CCA end + 3 diphosphate. It carries out the reaction a tRNA with a 3' CCA end + 2 CTP + ATP = a tRNA with a 3' CCACCA end + 3 diphosphate. Functionally, catalyzes the addition and repair of the essential 3'-terminal CCA sequence in tRNAs without using a nucleic acid template. Adds these three nucleotides in the order of C, C, and A to the tRNA nucleotide-73, using CTP and ATP as substrates and producing inorganic pyrophosphate. tRNA 3'-terminal CCA addition is required both for tRNA processing and repair. Also involved in tRNA surveillance by mediating tandem CCA addition to generate a CCACCA at the 3' terminus of unstable tRNAs. While stable tRNAs receive only 3'-terminal CCA, unstable tRNAs are marked with CCACCA and rapidly degraded. The polypeptide is Multifunctional CCA protein (Escherichia coli O81 (strain ED1a)).